The sequence spans 116 residues: Iron-sulfur cluster insertion protein ErpA (116 aa).

Iron-sulfur cluster contacts are provided by Cys-44, Cys-108, and Cys-110.

The protein belongs to the HesB/IscA family. As to quaternary structure, homodimer. It depends on iron-sulfur cluster as a cofactor.

Required for insertion of 4Fe-4S clusters for at least IspG. The protein is Iron-sulfur cluster insertion protein ErpA of Pseudomonas fluorescens (strain ATCC BAA-477 / NRRL B-23932 / Pf-5).